A 464-amino-acid polypeptide reads, in one-letter code: NADH-quinone oxidoreductase subunit N (464 aa).

Helical transmembrane passes span 6–26, 36–56, 75–95, 101–121, 123–143, 157–177, 197–217, 231–253, 257–279, 293–313, 317–337, 360–380, 395–415, and 439–459; these read FLYI…LVLG, SMSL…LIYF, CLAR…FFFA, YEFA…VEAH, FLSF…LVCF, FFVL…LVYG, LGAT…LGAV, PTVA…FAGL, VVIP…MVVG, FAYA…TGVV, PVLF…TVLL, AFTF…SGFF, FGVP…IPCF, and NVGL…VVLL.

This sequence belongs to the complex I subunit 2 family. NDH-1 is composed of 14 different subunits. Subunits NuoA, H, J, K, L, M, N constitute the membrane sector of the complex.

The protein resides in the cell inner membrane. It carries out the reaction a quinone + NADH + 5 H(+)(in) = a quinol + NAD(+) + 4 H(+)(out). NDH-1 shuttles electrons from NADH, via FMN and iron-sulfur (Fe-S) centers, to quinones in the respiratory chain. The immediate electron acceptor for the enzyme in this species is believed to be ubiquinone. Couples the redox reaction to proton translocation (for every two electrons transferred, four hydrogen ions are translocated across the cytoplasmic membrane), and thus conserves the redox energy in a proton gradient. This Anaplasma phagocytophilum (strain HZ) protein is NADH-quinone oxidoreductase subunit N.